The following is a 244-amino-acid chain: PF03932 family protein CutC (244 aa).

It belongs to the CutC family.

Its subcellular location is the cytoplasm. This chain is PF03932 family protein CutC, found in Pasteurella multocida (strain Pm70).